A 974-amino-acid polypeptide reads, in one-letter code: Receptor-like protein 7 (974 aa).

The signal sequence occupies residues 1 to 24 (MSFLIRSICFLILIPSFLITFVSA). The Extracellular portion of the chain corresponds to 25–930 (TQHLCHSDQK…EEEEEESFSW (906 aa)). Asn54 and Asn90 each carry an N-linked (GlcNAc...) asparagine glycan. LRR repeat units lie at residues 96 to 120 (LRHL…EFDK), 122 to 145 (TGLE…LLQL), 147 to 166 (KLVS…SFHY), 181 to 204 (LRNL…EFSN), 206 to 229 (RSLR…ILLI), and 230 to 252 (PNLQ…VFHE). Asn253 carries N-linked (GlcNAc...) asparagine glycosylation. LRR repeat units follow at residues 254–277 (NSLL…ISSL), 278–301 (KNLT…LGNL), 302–325 (SHLS…IGNL), 327–349 (QLTN…LSNL), and 350–373 (TKLN…ISQL). Asn279 and Asn300 each carry an N-linked (GlcNAc...) asparagine glycan. Asn348 carries N-linked (GlcNAc...) asparagine glycosylation. One copy of the LRR 12; degenerate repeat lies at 374 to 396 (SKLKFFFADDNPFIGAILSPLLK). 18 LRR repeats span residues 397-422 (IPSL…IFML), 425-448 (LETF…VFSS), 454-472 (TLYI…SDFP), 473-495 (SNLE…IRKG), 496-519 (RNLQ…LWRM), 521-542 (TLNS…VKAS), 544-570 (ESQL…SLRY), 572-589 (SGSN…ICGL), 590-616 (SSLE…LMSS), 618-638 (SDLD…FMNA), 639-662 (TKLR…LTGC), 664-685 (SLEV…ELNS), 687-712 (QKLQ…VWFG), 713-737 (FPQL…YFMN), 785-809 (LTIY…IGLL), 810-833 (KELR…LANL), 834-857 (KNLE…LGTL), and 859-882 (SLAW…QFQR). N-linked (GlcNAc...) asparagine glycans are attached at residues Asn434, Asn466, and Asn484. N-linked (GlcNAc...) asparagine glycosylation occurs at Asn529. 4 N-linked (GlcNAc...) asparagine glycosylation sites follow: Asn577, Asn603, Asn624, and Asn637. The N-linked (GlcNAc...) asparagine glycan is linked to Asn737. N-linked (GlcNAc...) asparagine glycans are attached at residues Asn816, Asn845, and Asn864. The disordered stretch occupies residues 899 to 923 (LENVCGHIKESTPTQTEPLETKEEE). A helical transmembrane segment spans residues 931–951 (IAAGLGFAPGVVFGLAMGYIV). The Cytoplasmic segment spans residues 952–974 (VSYKHQWFMKTFGRSKQQNTRTR).

It belongs to the RLP family.

The protein resides in the cell membrane. In Arabidopsis thaliana (Mouse-ear cress), this protein is Receptor-like protein 7.